The sequence spans 512 residues: uncharacterized protein (512 aa).

2 consecutive transmembrane segments (helical) span residues 20 to 40 (IFPVFMVMIIGLISFYAIYIW) and 222 to 242 (GIALLVVMGVVLILLVIFGYI). A Histidine kinase domain is found at 297–512 (EQLIQSIEQT…TLMCYQIPLV (216 aa)). Histidine 325 is modified (phosphohistidine; by autocatalysis).

In terms of processing, autophosphorylated.

Its subcellular location is the cell membrane. The enzyme catalyses ATP + protein L-histidine = ADP + protein N-phospho-L-histidine.. In terms of biological role, probable member of the two-component regulatory system SE_0166/SE_0165. May activate SE_0165 by phosphorylation. This is an uncharacterized protein from Staphylococcus epidermidis (strain ATCC 12228 / FDA PCI 1200).